The following is a 306-amino-acid chain: UDP-N-acetylenolpyruvoylglucosamine reductase (306 aa).

Residues 34–199 (KSGGAAEWLF…VAATFRGHAE (166 aa)) form the FAD-binding PCMH-type domain. The active site involves R179. Positions 215-234 (REASQPLRSRTGGSTFKNPQ) are disordered. Over residues 220 to 232 (PLRSRTGGSTFKN) the composition is skewed to polar residues. The active-site Proton donor is S228. The active site involves E298.

The protein belongs to the MurB family. FAD serves as cofactor.

The protein resides in the cytoplasm. It carries out the reaction UDP-N-acetyl-alpha-D-muramate + NADP(+) = UDP-N-acetyl-3-O-(1-carboxyvinyl)-alpha-D-glucosamine + NADPH + H(+). It participates in cell wall biogenesis; peptidoglycan biosynthesis. In terms of biological role, cell wall formation. This Rhizorhabdus wittichii (strain DSM 6014 / CCUG 31198 / JCM 15750 / NBRC 105917 / EY 4224 / RW1) (Sphingomonas wittichii) protein is UDP-N-acetylenolpyruvoylglucosamine reductase.